Reading from the N-terminus, the 412-residue chain is Acyl-[acyl-carrier-protein] hydrolase FATB3, chloroplastic (412 aa).

Residues 1 to 25 (MVAAAASSAFFSFPTPGTSPKPGKF) are compositionally biased toward low complexity. A chloroplast-targeting transit peptide spans 1-50 (MVAAAASSAFFSFPTPGTSPKPGKFGNWPSSLSIPFNPKSNHNGGIQVKA). Residues 1 to 63 (MVAAAASSAF…AHPKANGSAV (63 aa)) form a disordered region. Polar residues predominate over residues 28 to 44 (WPSSLSIPFNPKSNHNG). Active-site residues include Asn310, His312, and Cys347. A disordered region spans residues 393–412 (NAGATGAVSTGKTSNGNSVS). Residues 399-412 (AVSTGKTSNGNSVS) are compositionally biased toward polar residues.

Belongs to the acyl-ACP thioesterase family.

It localises to the plastid. Its subcellular location is the chloroplast. It carries out the reaction tetradecanoyl-[ACP] + H2O = tetradecanoate + holo-[ACP] + H(+). Functionally, plays an essential role in chain termination during de novo fatty acid synthesis. Possesses thioesterase activity for medium chain acyl-ACPs. Main substrate is 14:0. In Cuphea viscosissima (Blue waxweed), this protein is Acyl-[acyl-carrier-protein] hydrolase FATB3, chloroplastic.